Reading from the N-terminus, the 348-residue chain is Histidinol-phosphate aminotransferase (348 aa).

The interval 1–31 (MLPTRDCVRQTPAYTPGEQPQTAGFTKLNTN) is disordered. Residues 18–31 (EQPQTAGFTKLNTN) show a composition bias toward polar residues. The residue at position 207 (Lys-207) is an N6-(pyridoxal phosphate)lysine.

It belongs to the class-II pyridoxal-phosphate-dependent aminotransferase family. Histidinol-phosphate aminotransferase subfamily. As to quaternary structure, homodimer. Pyridoxal 5'-phosphate is required as a cofactor.

It carries out the reaction L-histidinol phosphate + 2-oxoglutarate = 3-(imidazol-4-yl)-2-oxopropyl phosphate + L-glutamate. It functions in the pathway amino-acid biosynthesis; L-histidine biosynthesis; L-histidine from 5-phospho-alpha-D-ribose 1-diphosphate: step 7/9. The chain is Histidinol-phosphate aminotransferase from Microcystis aeruginosa (strain NIES-843 / IAM M-2473).